The following is a 310-amino-acid chain: Phosphoribosylaminoimidazole-succinocarboxamide synthase (310 aa).

This sequence belongs to the SAICAR synthetase family.

It carries out the reaction 5-amino-1-(5-phospho-D-ribosyl)imidazole-4-carboxylate + L-aspartate + ATP = (2S)-2-[5-amino-1-(5-phospho-beta-D-ribosyl)imidazole-4-carboxamido]succinate + ADP + phosphate + 2 H(+). It functions in the pathway purine metabolism; IMP biosynthesis via de novo pathway; 5-amino-1-(5-phospho-D-ribosyl)imidazole-4-carboxamide from 5-amino-1-(5-phospho-D-ribosyl)imidazole-4-carboxylate: step 1/2. This chain is Phosphoribosylaminoimidazole-succinocarboxamide synthase, found in Dechloromonas aromatica (strain RCB).